Consider the following 141-residue polypeptide: Ribosome-binding factor A (141 aa).

Positions 120-141 (DEALRAQSAGARPAGDEDPYKP) are disordered.

The protein belongs to the RbfA family. In terms of assembly, monomer. Binds 30S ribosomal subunits, but not 50S ribosomal subunits or 70S ribosomes.

It localises to the cytoplasm. In terms of biological role, one of several proteins that assist in the late maturation steps of the functional core of the 30S ribosomal subunit. Associates with free 30S ribosomal subunits (but not with 30S subunits that are part of 70S ribosomes or polysomes). Required for efficient processing of 16S rRNA. May interact with the 5'-terminal helix region of 16S rRNA. This chain is Ribosome-binding factor A, found in Corynebacterium jeikeium (strain K411).